Reading from the N-terminus, the 485-residue chain is ATP synthase subunit beta 1 (485 aa).

ATP is bound at residue 157–164 (GGAGVGKT).

This sequence belongs to the ATPase alpha/beta chains family. In terms of assembly, F-type ATPases have 2 components, CF(1) - the catalytic core - and CF(0) - the membrane proton channel. CF(1) has five subunits: alpha(3), beta(3), gamma(1), delta(1), epsilon(1). CF(0) has three main subunits: a(1), b(2) and c(9-12). The alpha and beta chains form an alternating ring which encloses part of the gamma chain. CF(1) is attached to CF(0) by a central stalk formed by the gamma and epsilon chains, while a peripheral stalk is formed by the delta and b chains.

The protein localises to the cell inner membrane. The enzyme catalyses ATP + H2O + 4 H(+)(in) = ADP + phosphate + 5 H(+)(out). Produces ATP from ADP in the presence of a proton gradient across the membrane. The catalytic sites are hosted primarily by the beta subunits. The chain is ATP synthase subunit beta 1 from Psychromonas ingrahamii (strain DSM 17664 / CCUG 51855 / 37).